The following is an 842-amino-acid chain: Netrin receptor UNC5A (842 aa).

The signal sequence occupies residues 1–25 (MAVRPGLWPALLGIVLAAWLRGSGA). At 26–306 (QQSATVANPV…ASGPEDVALY (281 aa)) the chain is on the extracellular side. Residues 44-141 (PHFLVEPEDV…SGTTKSQKAY (98 aa)) enclose the Ig-like domain. 3 disulfides stabilise this stretch: C65–C126, C77–C124, and C170–C221. 2 N-linked (GlcNAc...) asparagine glycosylation sites follow: N107 and N218. In terms of domain architecture, Ig-like C2-type spans 155–234 (PLAKEVSLEQ…NIVARRRSAS (80 aa)). The TSP type-1 domain maps to 242–294 (DGSWSPWSKWSACGLDCTHWRSRECSDPAPRNGGEECQGTDLDTRNCTSDLCV). C-linked (Man) tryptophan glycans are attached at residues W245, W248, and W251. 3 disulfides stabilise this stretch: C254–C288, C258–C293, and C266–C278. N-linked (GlcNAc...) asparagine glycosylation occurs at N287. A helical membrane pass occupies residues 307 to 327 (VGLIAVAVCLVLLLLVLILVY). Topologically, residues 328–842 (CRKKEGLDSD…GLFTVSEAEC (515 aa)) are cytoplasmic. A ZU5 domain is found at 441–584 (NMTYGTFNFL…LGRFALVGEA (144 aa)). Positions 605–623 (SLEYNIRVYCLHDTHDALK) are interaction with DCC. The 81-residue stretch at 761-841 (QKIISSLDPP…AGLFTVSEAE (81 aa)) folds into the Death domain.

This sequence belongs to the unc-5 family. As to quaternary structure, homodimer and homooligomer. Interacts with the cytoplasmic part of DCC. Interacts with MAGED1. Interacts with PRKCABP, possibly mediating some interaction with PKC. Interacts (via extracellular domain) with FLRT2 (via extracellular domain). Interacts (via extracellular domain) with FLRT3 (via extracellular domain). Phosphorylated on cytoplasmic tyrosine residues. Phosphorylated by PKC in vitro. Post-translationally, proteolytically cleaved by caspases during apoptosis. The cleavage does not take place when the receptor is associated with netrin ligand. Its cleavage by caspases is required to induce apoptosis. In terms of processing, the two extracellular TSRs of UNC5A contain WxxWxxWxxC motifs that can be C-mannosylated on all tryptophans. DPY19L1 preferentially mannosylates the first two tryptophans and DPY19L3 prefers the third. C-mannosylation by DPY19L1 is required for transport of UNC5A from the endoplasmic reticulum to the cell surface.

It is found in the cell membrane. The protein resides in the membrane raft. It localises to the cell projection. The protein localises to the neuron projection. Receptor for netrin required for axon guidance. Functions in the netrin signaling pathway and promotes neurite outgrowth in response to NTN1. Mediates axon repulsion of neuronal growth cones in the developing nervous system in response to netrin. Axon repulsion in growth cones may be mediated by its association with DCC that may trigger signaling for repulsion. It also acts as a dependence receptor required for apoptosis induction when not associated with netrin ligand. In Homo sapiens (Human), this protein is Netrin receptor UNC5A (UNC5A).